We begin with the raw amino-acid sequence, 211 residues long: Shikimate kinase (211 aa).

Residues 1-13 (MNASANLCAASAN) are compositionally biased toward low complexity. The segment at 1-24 (MNASANLCAASANDPQPGDQEAAH) is disordered. 50-55 (GAGKTT) contributes to the ATP binding site. Thr54 is a binding site for Mg(2+). Residues Asp72, Arg96, and Gly118 each coordinate substrate. Residue Arg156 coordinates ATP. Residue Arg175 participates in substrate binding.

This sequence belongs to the shikimate kinase family. As to quaternary structure, monomer. Requires Mg(2+) as cofactor.

The protein localises to the cytoplasm. It carries out the reaction shikimate + ATP = 3-phosphoshikimate + ADP + H(+). Its pathway is metabolic intermediate biosynthesis; chorismate biosynthesis; chorismate from D-erythrose 4-phosphate and phosphoenolpyruvate: step 5/7. Catalyzes the specific phosphorylation of the 3-hydroxyl group of shikimic acid using ATP as a cosubstrate. This chain is Shikimate kinase, found in Bordetella parapertussis (strain 12822 / ATCC BAA-587 / NCTC 13253).